Consider the following 63-residue polypeptide: Beta-defensin 4 (63 aa).

An N-terminal signal peptide occupies residues 1–22 (MRIHYLLFSFLLVLLSPLSAFT). At Gln23 the chain carries Pyrrolidone carboxylic acid. 3 disulfide bridges follow: Cys31–Cys59, Cys38–Cys52, and Cys42–Cys60.

It belongs to the beta-defensin family. In terms of tissue distribution, highly expressed in lung.

Its subcellular location is the secreted. Functionally, exhibits antimicrobial activity against Gram-negative bacteria and Gram-positive bacteria. May act as a ligand for C-C chemokine receptor CCR6. Binds to CCR6 and induces chemotactic activity of CCR6-expressing cells. The chain is Beta-defensin 4 (Defb4) from Rattus norvegicus (Rat).